The sequence spans 198 residues: ATP-dependent Clp protease proteolytic subunit (198 aa).

The active-site Nucleophile is the serine 98. The active site involves histidine 123.

The protein belongs to the peptidase S14 family. As to quaternary structure, fourteen ClpP subunits assemble into 2 heptameric rings which stack back to back to give a disk-like structure with a central cavity, resembling the structure of eukaryotic proteasomes.

The protein resides in the cytoplasm. The catalysed reaction is Hydrolysis of proteins to small peptides in the presence of ATP and magnesium. alpha-casein is the usual test substrate. In the absence of ATP, only oligopeptides shorter than five residues are hydrolyzed (such as succinyl-Leu-Tyr-|-NHMec, and Leu-Tyr-Leu-|-Tyr-Trp, in which cleavage of the -Tyr-|-Leu- and -Tyr-|-Trp bonds also occurs).. Functionally, cleaves peptides in various proteins in a process that requires ATP hydrolysis. Has a chymotrypsin-like activity. Plays a major role in the degradation of misfolded proteins. The protein is ATP-dependent Clp protease proteolytic subunit of Bacillus pumilus (strain SAFR-032).